We begin with the raw amino-acid sequence, 210 residues long: Large ribosomal subunit protein uL3 (210 aa).

It belongs to the universal ribosomal protein uL3 family. As to quaternary structure, part of the 50S ribosomal subunit. Forms a cluster with proteins L14 and L19.

Its function is as follows. One of the primary rRNA binding proteins, it binds directly near the 3'-end of the 23S rRNA, where it nucleates assembly of the 50S subunit. In Amoebophilus asiaticus (strain 5a2), this protein is Large ribosomal subunit protein uL3.